The primary structure comprises 187 residues: MSKKSGKGKGKNDGDELGAEKEQVLRTKVESLIQRLGHEQERADRAKAAENELRARLFDLDKDFKNEKDRLFSITSDMTRQYKQMQDELLNQVNDLNKTVIEKDEEIKKKDQQIQDMTKDYEYKLKKKDDEIQDLKRKIEEMSAEFAKMLKDTLDKMQERIEMVQWDSDTDPQMMKRLKDMTGLSNN.

The segment at 1-23 (MSKKSGKGKGKNDGDELGAEKEQ) is disordered. The segment covering 10 to 23 (GKNDGDELGAEKEQ) has biased composition (basic and acidic residues).

It belongs to the DRC12 family. As to quaternary structure, component of the nexin-dynein regulatory complex (N-DRC).

The protein resides in the cytoplasm. Its subcellular location is the cytoskeleton. It is found in the flagellum axoneme. Its function is as follows. Component of the nexin-dynein regulatory complex (N-DRC), a key regulator of ciliary/flagellar motility which maintains the alignment and integrity of the distal axoneme and regulates microtubule sliding in motile axonemes. This is Dynein regulatory complex protein 12 (DRC12) from Tetrahymena thermophila (strain SB210).